The sequence spans 513 residues: Cytochrome P450 705A1 (513 aa).

The chain crosses the membrane as a helical span at residues 9-29 (QNCFIIILLCSFSLISYFVFF). C448 contributes to the heme binding site.

The protein belongs to the cytochrome P450 family. Heme is required as a cofactor. In terms of tissue distribution, expressed in root stele, root cortex, root epidermis, root pericycle of the root hair zone, and quiescent center at the root meristematic zone.

It localises to the membrane. Functionally, cleaves the arabidiol side chain at C15 to form 14-apo-arabidiol and a side-chain fragment. Involved in the biosynthesis of the volatile homoterpene (E)-4,8-dimethyl-1,3,7-nonatriene (DMNT) in roots. Involved in the production of DMNT by degrading the triterpene arabidiol. May be involved in the defense again the fungal root pathogen Pythium irregulare by producing DMNT. The protein is Cytochrome P450 705A1 of Arabidopsis thaliana (Mouse-ear cress).